The primary structure comprises 337 residues: UbiA prenyltransferase domain-containing protein 1 (337 aa).

An N-acetylalanine modification is found at Ala2. Transmembrane regions (helical) follow at residues 82 to 102 (LLVG…LVNT), 133 to 153 (FGVF…CLSP), 159 to 179 (LALI…GIGF), 187 to 207 (LVIL…VQVG), 208 to 228 (SLAV…EAVL), 244 to 266 (IVTL…LLFL), 276 to 296 (THCS…FSLE), and 314 to 334 (LNLL…AGSL).

It belongs to the UbiA prenyltransferase family. Interacts with HMGCR and SOAT1.

It is found in the endoplasmic reticulum membrane. The protein localises to the golgi apparatus membrane. It localises to the mitochondrion membrane. It catalyses the reaction menadiol + (2E,6E,10E)-geranylgeranyl diphosphate = menaquinol-4 + diphosphate. The catalysed reaction is all-trans-decaprenyl diphosphate + 4-hydroxybenzoate = 4-hydroxy-3-(all-trans-decaprenyl)benzoate + diphosphate. It participates in quinol/quinone metabolism; menaquinone biosynthesis. It functions in the pathway cofactor biosynthesis; ubiquinone biosynthesis. In terms of biological role, prenyltransferase that mediates the formation of menaquinone-4 (MK-4) and coenzyme Q10. MK-4 is a vitamin K2 isoform required for endothelial cell development. Mediates the conversion of phylloquinone (PK) into MK-4, probably by cleaving the side chain of phylloquinone (PK) to release 2-methyl-1,4-naphthoquinone (menadione; K3) and then prenylating it with geranylgeranyl pyrophosphate (GGPP) to form MK-4. Also plays a role in cardiovascular development independently of MK-4 biosynthesis, by acting as a coenzyme Q10 biosynthetic enzyme: coenzyme Q10, also named ubiquinone, plays an important antioxidant role in the cardiovascular system. Mediates biosynthesis of coenzyme Q10 in the Golgi membrane, leading to protect cardiovascular tissues from NOS3/eNOS-dependent oxidative stress. This chain is UbiA prenyltransferase domain-containing protein 1 (UBIAD1), found in Ailuropoda melanoleuca (Giant panda).